A 604-amino-acid chain; its full sequence is uncharacterized protein (604 aa).

An N-terminal signal peptide occupies residues 1–40; the sequence is MWLQQRIKVFPGLLSSSWARRVLAVSGFLVIIYWYIFSGS. At 41 to 563 the chain is on the extracellular side; sequence HYRSFWYSGK…EEHMAKQYRG (523 aa). The N-linked (GlcNAc...) asparagine glycan is linked to N337. A helical membrane pass occupies residues 564–584; that stretch reads LPFLFWFSVASLITLFHLFLF. Residues 585 to 604 lie on the Cytoplasmic side of the membrane; the sequence is KLIYNEYCGPGAKPLFRSKV.

It localises to the membrane. This is an uncharacterized protein from Xenopus laevis (African clawed frog).